The chain runs to 360 residues: Putative transport protein BU123 (360 aa).

Transmembrane regions (helical) follow at residues 18 to 38, 39 to 59, 66 to 86, 161 to 181, 204 to 224, 230 to 250, 251 to 271, 280 to 300, and 316 to 336; these read IFIV…ILGF, FWAS…QKIL, AVII…FFLV, GLFI…YWNG, LLLA…TALI, GIGL…IIFF, SCLI…WLYW, ILLI…PFFI, and IGGL…VLVI.

The protein belongs to the autoinducer-2 exporter (AI-2E) (TC 2.A.86) family.

It localises to the cell membrane. The protein is Putative transport protein BU123 of Buchnera aphidicola subsp. Acyrthosiphon pisum (strain APS) (Acyrthosiphon pisum symbiotic bacterium).